A 149-amino-acid chain; its full sequence is Calmodulin (149 aa).

Ala-2 is subject to N-acetylalanine. EF-hand domains follow at residues 8–43 (EQIS…LGQN), 44–79 (PTEA…KMRD), 81–116 (DSEE…LGEK), and 117–149 (LTDN…MLSK). The Ca(2+) site is built by Asp-21, Asp-23, Asp-25, Thr-27, Glu-32, Asp-57, Asp-59, Asn-61, Thr-63, Glu-68, Asp-94, Asp-96, Asn-98, Tyr-100, Glu-105, Asp-130, Asp-132, Asp-134, Gln-136, and Glu-141.

The protein belongs to the calmodulin family. In terms of processing, trimethylation of Lys-116 observed in other calmodulins is absent here.

Calmodulin mediates the control of a large number of enzymes, ion channels and other proteins by Ca(2+). Among the enzymes to be stimulated by the calmodulin-Ca(2+) complex are a number of protein kinases and phosphatases. The sequence is that of Calmodulin (CMD1) from Pleurotus cornucopiae (Cornucopia mushroom).